The chain runs to 473 residues: Arginine biosynthesis bifunctional protein ArgJ, mitochondrial (473 aa).

Substrate is bound by residues Thr201, Lys230, Thr241, Glu328, Asn468, and Thr473. Thr241 functions as the Nucleophile in the catalytic mechanism.

Belongs to the ArgJ family. As to quaternary structure, heterodimer of an alpha and a beta chain. Post-translationally, the alpha and beta chains are autoproteolytically processed from a single precursor protein within the mitochondrion.

Its subcellular location is the mitochondrion matrix. The enzyme catalyses N(2)-acetyl-L-ornithine + L-glutamate = N-acetyl-L-glutamate + L-ornithine. It catalyses the reaction L-glutamate + acetyl-CoA = N-acetyl-L-glutamate + CoA + H(+). The protein operates within amino-acid biosynthesis; L-arginine biosynthesis; L-ornithine and N-acetyl-L-glutamate from L-glutamate and N(2)-acetyl-L-ornithine (cyclic): step 1/1. It functions in the pathway amino-acid biosynthesis; L-arginine biosynthesis; N(2)-acetyl-L-ornithine from L-glutamate: step 1/4. In terms of biological role, catalyzes two activities which are involved in the cyclic version of arginine biosynthesis: the synthesis of acetylglutamate from glutamate and acetyl-CoA, and of ornithine by transacetylation between acetylornithine and glutamate. In Paracoccidioides lutzii (strain ATCC MYA-826 / Pb01) (Paracoccidioides brasiliensis), this protein is Arginine biosynthesis bifunctional protein ArgJ, mitochondrial.